A 271-amino-acid chain; its full sequence is uncharacterized protein (271 aa).

The DOD-type homing endonuclease domain occupies 77 to 205 (IIGVYFGDAN…SKELLKKLDV (129 aa)).

This is an uncharacterized protein from Methanocaldococcus jannaschii (strain ATCC 43067 / DSM 2661 / JAL-1 / JCM 10045 / NBRC 100440) (Methanococcus jannaschii).